We begin with the raw amino-acid sequence, 215 residues long: Ras-related protein Rab-14 (215 aa).

A2 is subject to N-acetylalanine. The GTP site is built by G21, V22, G23, K24, S25, C26, A38, D39, C40, H42, and T43. S25 contributes to the Mg(2+) binding site. The Switch 1 signature appears at 42 to 47; the sequence is HTIGVE. Residues T43 and D66 each contribute to the Mg(2+) site. A Switch 2 motif is present at residues 68–77; that stretch reads AGQERFRAVT. Residues G69, N124, K125, D127, A155, and K156 each coordinate GTP. The segment at 188–215 is disordered; it reads SGVQHKPSAPQGGRLTSEPQPQREGCGC. 2 S-geranylgeranyl cysteine lipidation sites follow: C213 and C215. Position 215 is a cysteine methyl ester (C215).

The protein belongs to the small GTPase superfamily. Rab family. The cofactor is Mg(2+).

The protein localises to the recycling endosome. The protein resides in the early endosome membrane. It localises to the golgi apparatus membrane. Its subcellular location is the golgi apparatus. It is found in the trans-Golgi network membrane. The protein localises to the cytoplasmic vesicle. The protein resides in the phagosome. The enzyme catalyses GTP + H2O = GDP + phosphate + H(+). Regulated by guanine nucleotide exchange factors (GEFs) including DENND6A and DENND6B which promote the exchange of bound GDP for free GTP. Regulated by GTPase activating proteins (GAPs) which increase the GTP hydrolysis activity. Inhibited by GDP dissociation inhibitors (GDIs) which prevent Rab-GDP dissociation. Its function is as follows. The small GTPases Rab are key regulators of intracellular membrane trafficking, from the formation of transport vesicles to their fusion with membranes. Rabs cycle between an inactive GDP-bound form and an active GTP-bound form that is able to recruit to membranes different set of downstream effectors directly responsible for vesicle formation, movement, tethering and fusion. Involved in membrane trafficking between the Golgi complex and endosomes during early embryonic development. Regulates the Golgi to endosome transport of FGFR-containing vesicles during early development, a key process for developing basement membrane and epiblast and primitive endoderm lineages during early postimplantation development. May act by modulating the kinesin KIF16B-cargo association to endosomes. Regulates, together with its guanine nucleotide exchange factor DENND6A, the specific endocytic transport of ADAM10, N-cadherin/CDH2 shedding and cell-cell adhesion. Mediates endosomal tethering and fusion through the interaction with RUFY1 and RAB4B. Interaction with RAB11FIP1 may function in the process of neurite formation. The chain is Ras-related protein Rab-14 (RAB14) from Gallus gallus (Chicken).